Reading from the N-terminus, the 469-residue chain is SVGFKAGVKEYKLTYYTPEYQTKDTDILAAFRVTPQPGVPPEEAGAAVRAESSTGTWTTVWTDGLTSLDRYKGRCYHXEAVLGEEDQYIAYVAYPLDLFEEGSVTNMFTSIVGNVFGFKALRALRLEDLRIPNAYIKTFQGPPHGIQVERDKLNKYGRPLLGCTIKPKLGLSAKNYGRAVYECLRGGLDFTKDDENVNSQPFMRWRDRFLFCAEAIYKAQAETGEIKGHYLNATAGTCEEMIKRAVFARELGVPIVMHDYLTGGFTANTSLAHYCRDNGLLLHIHRAMHAVIDRQKNHGMHFRVLAKALRLSGGDHIHAGTVVGKLEGERDITLGFVDLLRDDFIEKDRSRGIYFTQDWVSLPGVXPVASGGIHVWHMPALTEIFGDDXRXQFGGGTLGHPWGNAPGAVANRVALEACVKARNEGRDLAVEGNEIIREASKWSPELAAACEVWKEIRFNFKAVDTLDPS.

Residue Lys5 is modified to N6,N6,N6-trimethyllysine. 2 residues coordinate substrate: Asn114 and Thr164. The Proton acceptor role is filled by Lys166. A substrate-binding site is contributed by Lys168. Positions 192, 194, and 195 each coordinate Mg(2+). Lys192 bears the N6-carboxylysine mark. The active-site Proton acceptor is the His285. Residues Arg286, His318, and Ser370 each coordinate substrate.

It belongs to the RuBisCO large chain family. Type I subfamily. Heterohexadecamer of 8 large chains and 8 small chains; disulfide-linked. The disulfide link is formed within the large subunit homodimers. Mg(2+) serves as cofactor. Post-translationally, the disulfide bond which can form in the large chain dimeric partners within the hexadecamer appears to be associated with oxidative stress and protein turnover.

The protein localises to the plastid. Its subcellular location is the chloroplast. The enzyme catalyses 2 (2R)-3-phosphoglycerate + 2 H(+) = D-ribulose 1,5-bisphosphate + CO2 + H2O. It catalyses the reaction D-ribulose 1,5-bisphosphate + O2 = 2-phosphoglycolate + (2R)-3-phosphoglycerate + 2 H(+). Functionally, ruBisCO catalyzes two reactions: the carboxylation of D-ribulose 1,5-bisphosphate, the primary event in carbon dioxide fixation, as well as the oxidative fragmentation of the pentose substrate in the photorespiration process. Both reactions occur simultaneously and in competition at the same active site. This is Ribulose bisphosphate carboxylase large chain from Antirhea lucida (Palo iloron).